Consider the following 740-residue polypeptide: ATP-dependent zinc metalloprotease YME1L (740 aa).

Over M1–K256 the chain is Mitochondrial matrix. The chain crosses the membrane as a helical span at residues T257 to T277. At S278 to T740 the chain is on the mitochondrial intermembrane side. G347–T351 contacts ATP. H563 contributes to the Zn(2+) binding site. E564 is an active-site residue. Zn(2+)-binding residues include H567 and D641.

It in the N-terminal section; belongs to the AAA ATPase family. This sequence in the C-terminal section; belongs to the peptidase M41 family. It depends on Zn(2+) as a cofactor.

The protein resides in the mitochondrion inner membrane. Its function is as follows. ATP-dependent metalloprotease that catalyzes the degradation of folded and unfolded proteins with a suitable degron sequence in the mitochondrial intermembrane region. Plays an important role in regulating mitochondrial morphology and function by cleaving Opa1, giving rise to a form of Opa1 that promotes maintenance of normal mitochondrial structure and mitochondrial protein metabolism. Ensures cell proliferation, maintains normal cristae morphology and complex I respiration activity, promotes antiapoptotic activity and protects mitochondria from the accumulation of oxidatively damaged membrane proteins. Required to control the accumulation of nonassembled respiratory chain subunits such as ND-30. This is ATP-dependent zinc metalloprotease YME1L from Drosophila melanogaster (Fruit fly).